Reading from the N-terminus, the 469-residue chain is Glutamate--tRNA ligase (469 aa).

The short motif at 11–21 (PSPTGFIHLGN) is the 'HIGH' region element. The 'KMSKS' region signature appears at 243-247 (KMSKR). Lys246 is a binding site for ATP.

The protein belongs to the class-I aminoacyl-tRNA synthetase family. Glutamate--tRNA ligase type 1 subfamily. In terms of assembly, monomer.

The protein localises to the cytoplasm. It catalyses the reaction tRNA(Glu) + L-glutamate + ATP = L-glutamyl-tRNA(Glu) + AMP + diphosphate. Catalyzes the attachment of glutamate to tRNA(Glu) in a two-step reaction: glutamate is first activated by ATP to form Glu-AMP and then transferred to the acceptor end of tRNA(Glu). The protein is Glutamate--tRNA ligase of Burkholderia cenocepacia (strain ATCC BAA-245 / DSM 16553 / LMG 16656 / NCTC 13227 / J2315 / CF5610) (Burkholderia cepacia (strain J2315)).